Consider the following 434-residue polypeptide: Protein FAM83A (434 aa).

The tract at residues 1–298 (MSRSRHLGKI…LYASSKPVMG (298 aa)) is DUF1669. Residues 76 to 97 (REPPCPPDTLGGAEAGPKGLDS) form a disordered region. S301, S327, S348, and S357 each carry phosphoserine. Positions 308–399 (VPPGAAPANG…HDGPPAAVYS (92 aa)) are disordered. Composition is skewed to low complexity over residues 320–332 (SSSS…RTSS) and 348–357 (SVSASSGPCS). Residues 358–369 (PAAPHPPPPPRF) show a composition bias toward pro residues.

The protein belongs to the FAM83 family. In terms of assembly, directly interacts (via DUF1669) with casein kinase isoforms CSNK1A1, CSNK1A1L, CSNK1D and CSNK1E. In terms of processing, phosphorylated upon EGFR activation in a breast cancer cell line.

It is found in the cytoplasm. Its function is as follows. Involved in mitochondrial maintenance during adipogenesis. May be acting by playing a role in the maintenance of normal mitochondrial function. This chain is Protein FAM83A, found in Homo sapiens (Human).